Reading from the N-terminus, the 246-residue chain is uncharacterized protein (246 aa).

4 consecutive transmembrane segments (helical) span residues 32-52 (TLFF…VGFI), 69-89 (IIAI…MCPF), 121-141 (IYFK…GVKI), and 146-166 (LAYL…MFFC). 2 consecutive 4Fe-4S ferredoxin-type domains span residues 185–213 (FKLK…ITEK) and 210–239 (ITEK…FSAF). Residues cysteine 194, cysteine 197, cysteine 200, cysteine 204, cysteine 219, cysteine 222, cysteine 225, and cysteine 229 each coordinate [4Fe-4S] cluster.

Its subcellular location is the cell membrane. This is an uncharacterized protein from Methanocaldococcus jannaschii (strain ATCC 43067 / DSM 2661 / JAL-1 / JCM 10045 / NBRC 100440) (Methanococcus jannaschii).